A 246-amino-acid polypeptide reads, in one-letter code: Probable ABC transporter permease protein BMEII0107 (246 aa).

Transmembrane regions (helical) follow at residues 12-32, 63-83, 94-114, 122-142, 172-192, and 211-231; these read LLSF…GAVV, VLSG…LMGW, WVQF…IVTL, IFVI…QGVI, VPFI…TVVA, and LYYD…LGLF. Residues 56–236 form the ABC transmembrane type-1 domain; sequence IFASLRRVLS…ILGLFMDRLL (181 aa).

It belongs to the binding-protein-dependent transport system permease family. As to quaternary structure, the complex is composed of two ATP-binding proteins (BMEII0108), two transmembrane proteins (BMEII0107) and a solute-binding protein (BMEII0109).

The protein localises to the cell inner membrane. Its function is as follows. Probably part of an ABC transporter complex. Probably responsible for the translocation of the substrate across the membrane. In Brucella melitensis biotype 1 (strain ATCC 23456 / CCUG 17765 / NCTC 10094 / 16M), this protein is Probable ABC transporter permease protein BMEII0107.